Here is an 875-residue protein sequence, read N- to C-terminus: Leucine--tRNA ligase (875 aa).

The 'HIGH' region signature appears at 43-53 (PYPSGRIHIGH). A 'KMSKS' region motif is present at residues 631–635 (KMSKS). ATP is bound at residue Lys-634.

This sequence belongs to the class-I aminoacyl-tRNA synthetase family.

It localises to the cytoplasm. It catalyses the reaction tRNA(Leu) + L-leucine + ATP = L-leucyl-tRNA(Leu) + AMP + diphosphate. This Mesorhizobium japonicum (strain LMG 29417 / CECT 9101 / MAFF 303099) (Mesorhizobium loti (strain MAFF 303099)) protein is Leucine--tRNA ligase.